The following is a 368-amino-acid chain: C-X-C chemokine receptor type 3 (368 aa).

At 1-53 the chain is on the extracellular side; that stretch reads MVLEVSDHQVLNDAEVAALLENFSSSYDYGENESDSCCTSPPCPQDFSLNFDR. A glycan (N-linked (GlcNAc...) asparagine) is linked at Asn-22. A sulfotyrosine mark is found at Tyr-27 and Tyr-29. N-linked (GlcNAc...) asparagine glycosylation occurs at Asn-32. A helical membrane pass occupies residues 54–80; the sequence is AFLPALYSLLFLLGLLGNGAVAAVLLS. The Cytoplasmic segment spans residues 81-89; the sequence is RRTALSSTD. Residues 90 to 110 form a helical membrane-spanning segment; that stretch reads TFLLHLAVADTLLVLTLPLWA. The Extracellular segment spans residues 111–125; sequence VDAAVQWVFGSGLCK. Residues Cys-124 and Cys-203 are joined by a disulfide bond. A helical transmembrane segment spans residues 126-147; it reads VAGALFNINFYAGALLLACISF. Residues 148 to 169 lie on the Cytoplasmic side of the membrane; sequence DRYLNIVHATQLYRRGPPARVT. The helical transmembrane segment at 170–189 threads the bilayer; that stretch reads LTCLAVWGLCLLFALPDFIF. Topologically, residues 190–212 are extracellular; the sequence is LSAHHDERLNATHCQYNFPQVGR. A helical membrane pass occupies residues 213-233; it reads TALRVLQLVAGFLLPLLVMAY. Residues 234–255 are Cytoplasmic-facing; sequence CYAHILAVLLVSRGQRRLRAMR. The helical transmembrane segment at 256–277 threads the bilayer; it reads LVVVVVVAFALCWTPYHLVVLV. At 278–298 the chain is on the extracellular side; that stretch reads DILMDLGALARNCGRESRVDV. A helical transmembrane segment spans residues 299 to 321; it reads AKSVTSGLGYMHCCLNPLLYAFV. Residues 322–368 are Cytoplasmic-facing; sequence GVKFRERMWMLLLRLGCPNQRGLQRQPSSSRRDSSWSETSEASYSGL. The interval 342–368 is disordered; the sequence is RGLQRQPSSSRRDSSWSETSEASYSGL. Low complexity predominate over residues 357 to 368; it reads WSETSEASYSGL.

It belongs to the G-protein coupled receptor 1 family. Homomer. Forms heteromers with ACKR4. In terms of assembly, interacts with PF4/CXCL4. Post-translationally, sulfation on Tyr-27 and Tyr-29 is essential for CXCL10 binding and subsequent signal transduction induction. N-glycosylated. As to expression, isoform 1 and isoform 2 are mainly expressed in heart, kidney, liver and skeletal muscle. Isoform 1 is also expressed in placenta. Isoform 2 is expressed in endothelial cells. Expressed in T-cells (at protein level).

The protein resides in the cell membrane. Functionally, receptor for the C-X-C chemokine CXCL9, CXCL10 and CXCL11 and mediates the proliferation, survival and angiogenic activity of human mesangial cells (HMC) through a heterotrimeric G-protein signaling pathway. Binds to CCL21. Probably promotes cell chemotaxis response. Upon activation by PF4, induces activated T-lymphocytes migration mediated via downstream Ras/extracellular signal-regulated kinase (ERK) signaling. Receptor for the C-X-C chemokine CXCL4 and also mediates the inhibitory activities of CXCL9, CXCL10 and CXCL11 on the proliferation, survival and angiogenic activity of human microvascular endothelial cells (HMVEC) through a cAMP-mediated signaling pathway. Does not promote cell chemotaxis respons. Interaction with CXCL4 or CXCL10 leads to activation of the p38MAPK pathway and contributes to inhibition of angiogenesis. Overexpression in renal cancer cells down-regulates expression of the anti-apoptotic protein HMOX1 and promotes apoptosis. Its function is as follows. Mediates the activity of CXCL11. This is C-X-C chemokine receptor type 3 (CXCR3) from Homo sapiens (Human).